Consider the following 312-residue polypeptide: Small ribosomal subunit protein uS2m (312 aa).

This sequence belongs to the universal ribosomal protein uS2 family.

The protein resides in the mitochondrion. The protein is Small ribosomal subunit protein uS2m (RPS2) of Acanthamoeba castellanii (Amoeba).